Consider the following 1066-residue polypeptide: Vinculin (1066 aa).

An N-terminal globular head region spans residues 1–835 (MPVFHTRTIE…GAVAKVREAF (835 aa)). Phosphoserine is present on serine 97. The segment at 168–208 (MTKMAKMIDERQQELTHQEHRVMLVNSMNTVKELLPVLISA) is talin-interaction. At lysine 173 the chain carries N6-acetyllysine. Tandem repeats lie at residues 259-369 (ASKD…KVEN), 370-479 (AARK…KTNR), and 480-589 (AVAN…QMQE). Positions 259–589 (ASKDTEAMKR…LKDLKTQMQE (331 aa)) are 3 X 112 AA tandem repeats. Residues serine 260, serine 272, serine 275, serine 290, serine 346, and serine 434 each carry the phosphoserine modification. N6-acetyllysine is present on lysine 496. At tyrosine 537 the chain carries Phosphotyrosine. Serine 574, serine 579, and serine 600 each carry phosphoserine. Phosphothreonine is present on residues threonine 604 and threonine 672. Serine 721 bears the Phosphoserine mark. The tract at residues 741–764 (MANIQPQMLVAGATSIARRANRIL) is interaction with ACTN4. Residues serine 795 and serine 809 each carry the phosphoserine modification. Tyrosine 822 bears the Phosphotyrosine mark. The interval 836–878 (QPQEPDFPPPPPDLEQLRLTDELAPPKPPLPEGEVPPPRPPPP) is linker (Pro-rich). The disordered stretch occupies residues 857-887 (ELAPPKPPLPEGEVPPPRPPPPEEKDEEFPE). The segment covering 860–876 (PPKPPLPEGEVPPPRPP) has biased composition (pro residues). A C-terminal tail region spans residues 879–1066 (EEKDEEFPEQ…RWVRKTPWYQ (188 aa)). 2 facilitates phospholipid membrane insertion regions span residues 935 to 978 (RLVR…KRIR) and 1052 to 1066 (AGFT…PWYQ). Residue tyrosine 1065 is modified to Phosphotyrosine; by SRC-type Tyr-kinases.

The protein belongs to the vinculin/alpha-catenin family. In terms of assembly, exhibits self-association properties. Part of a complex composed of THSD1, PTK2/FAK1, TLN1 and VCL. Interacts with APBB1IP, NRAP and TLN1. Interacts with CTNNB1 and this interaction is necessary for its localization to the cell-cell junctions and for its function in regulating cell surface expression of E-cadherin. Interacts with SORBS1. Interacts with SYNM. Interacts with CTNNA1. Binds to ACTN4; this interaction triggers conformational changes. Interacts with FLII. Post-translationally, phosphorylated; on serines, threonines and tyrosines. Phosphorylation on Tyr-1065 in activated platelets affects head-tail interactions and cell spreading but has no effect on actin binding nor on localization to focal adhesion plaques. Acetylated; mainly by myristic acid but also by a small amount of palmitic acid.

The protein localises to the cell membrane. Its subcellular location is the cell junction. It is found in the adherens junction. It localises to the focal adhesion. The protein resides in the cytoplasm. The protein localises to the cytoskeleton. Its subcellular location is the sarcolemma. It is found in the cell projection. It localises to the podosome. Actin filament (F-actin)-binding protein involved in cell-matrix adhesion and cell-cell adhesion. Regulates cell-surface E-cadherin expression and potentiates mechanosensing by the E-cadherin complex. May also play important roles in cell morphology and locomotion. The sequence is that of Vinculin from Rattus norvegicus (Rat).